A 196-amino-acid chain; its full sequence is Ribosome-binding factor A (196 aa).

This sequence belongs to the RbfA family. Monomer. Binds 30S ribosomal subunits, but not 50S ribosomal subunits or 70S ribosomes.

Its subcellular location is the cytoplasm. In terms of biological role, one of several proteins that assist in the late maturation steps of the functional core of the 30S ribosomal subunit. Associates with free 30S ribosomal subunits (but not with 30S subunits that are part of 70S ribosomes or polysomes). Required for efficient processing of 16S rRNA. May interact with the 5'-terminal helix region of 16S rRNA. In Tropheryma whipplei (strain TW08/27) (Whipple's bacillus), this protein is Ribosome-binding factor A.